Consider the following 548-residue polypeptide: Putative ATP-dependent RNA helicase R290 (548 aa).

A Helicase ATP-binding domain is found at 38 to 206; the sequence is INKVINGEDV…CKVLQLKTNE (169 aa). 51–58 serves as a coordination point for ATP; that stretch reads LMTSAGKS. Residues 150-153 carry the DEAH box motif; it reads DEAH. In terms of domain architecture, Helicase C-terminal spans 231–376; that stretch reads DIVPIINKYP…KTQLALLEQM (146 aa).

It belongs to the DEAD box helicase family. DEAH subfamily.

It catalyses the reaction ATP + H2O = ADP + phosphate + H(+). This is Putative ATP-dependent RNA helicase R290 from Acanthamoeba polyphaga mimivirus (APMV).